The chain runs to 395 residues: Carbohydrate sulfotransferase 5 (395 aa).

Topologically, residues 1–7 are cytoplasmic; that stretch reads MRLPRFS. A helical; Signal-anchor for type II membrane protein transmembrane segment spans residues 8-26; the sequence is STVMLSLLMVQTGILVFLV. The Lumenal portion of the chain corresponds to 27-395; sequence SRQVPSSPAG…ASSTEKQPES (369 aa). 49-55 serves as a coordination point for 3'-phosphoadenylyl sulfate; it reads WRSGSSF. Asn116 and Asn142 each carry an N-linked (GlcNAc...) asparagine glycan. 202–210 is a 3'-phosphoadenylyl sulfate binding site; that stretch reads RDPRAVLRS. 2 N-linked (GlcNAc...) asparagine glycosylation sites follow: Asn229 and Asn305.

Belongs to the sulfotransferase 1 family. Gal/GlcNAc/GalNAc subfamily. Expressed in cornea.

It is found in the golgi apparatus membrane. Functionally, sulfotransferase that utilizes 3'-phospho-5'-adenylyl sulfate (PAPS) as sulfonate donor to catalyze the transfer of sulfate to position 6 of non-reducing N-acetylglucosamine (GlcNAc) residues of keratan. Mediates sulfation of keratan in cornea. Keratan sulfate plays a central role in maintaining corneal transparency. Acts on the non-reducing terminal GlcNAc of short and long carbohydrate substrates that have poly-N-acetyllactosamine structures. May also have activity toward O-linked sugars of mucin-type acceptors. This Mus musculus (Mouse) protein is Carbohydrate sulfotransferase 5 (Chst5).